Consider the following 335-residue polypeptide: Anthranilate phosphoribosyltransferase (335 aa).

Residues Gly82, 85 to 86 (GD), Thr90, 92 to 95 (NIST), 110 to 118 (KHGGRSVSS), and Ser122 contribute to the 5-phospho-alpha-D-ribose 1-diphosphate site. Residue Gly82 coordinates anthranilate. Ser94 lines the Mg(2+) pocket. Arg168 serves as a coordination point for anthranilate. Residues Asp226 and Glu227 each coordinate Mg(2+).

The protein belongs to the anthranilate phosphoribosyltransferase family. In terms of assembly, homodimer. The cofactor is Mg(2+).

It carries out the reaction N-(5-phospho-beta-D-ribosyl)anthranilate + diphosphate = 5-phospho-alpha-D-ribose 1-diphosphate + anthranilate. It participates in amino-acid biosynthesis; L-tryptophan biosynthesis; L-tryptophan from chorismate: step 2/5. Functionally, catalyzes the transfer of the phosphoribosyl group of 5-phosphorylribose-1-pyrophosphate (PRPP) to anthranilate to yield N-(5'-phosphoribosyl)-anthranilate (PRA). The chain is Anthranilate phosphoribosyltransferase from Francisella philomiragia subsp. philomiragia (strain ATCC 25017 / CCUG 19701 / FSC 153 / O#319-036).